The primary structure comprises 111 residues: Large ribosomal subunit protein P2w (111 aa).

The interval 63–111 is disordered; that stretch reads ASVPSGGGVAVSAAPSSGGGGAAAPAEKKEAKKEEKEESDDDMGFSLFE. A compositionally biased stretch (basic and acidic residues) spans 88–98; the sequence is AEKKEAKKEEK. At Ser-101 the chain carries Phosphoserine.

It belongs to the eukaryotic ribosomal protein P1/P2 family. In terms of assembly, P1 and P2 exist as dimers at the large ribosomal subunit.

Its function is as follows. Plays an important role in the elongation step of protein synthesis. The protein is Large ribosomal subunit protein P2w (RPP2D) of Arabidopsis thaliana (Mouse-ear cress).